We begin with the raw amino-acid sequence, 642 residues long: Threonine--tRNA ligase (642 aa).

The 61-residue stretch at 1 to 61 (MPVITITNGL…MQDSKLDIIT (61 aa)) folds into the TGS domain. The segment at 243 to 534 (DHRKIGQQLD…LIEEYAGFFP (292 aa)) is catalytic. Cys334, His385, and His511 together coordinate Zn(2+).

It belongs to the class-II aminoacyl-tRNA synthetase family. In terms of assembly, homodimer. The cofactor is Zn(2+).

It is found in the cytoplasm. It catalyses the reaction tRNA(Thr) + L-threonine + ATP = L-threonyl-tRNA(Thr) + AMP + diphosphate + H(+). Functionally, catalyzes the attachment of threonine to tRNA(Thr) in a two-step reaction: L-threonine is first activated by ATP to form Thr-AMP and then transferred to the acceptor end of tRNA(Thr). Also edits incorrectly charged L-seryl-tRNA(Thr). The protein is Threonine--tRNA ligase of Baumannia cicadellinicola subsp. Homalodisca coagulata.